The chain runs to 148 residues: MFFPNPEERPYKLPALCEEVNISIHEIELDCVYCERQLYRCEVYDFIFRDLCVVYRKGKPLGVCQPCLLFYSKVRQYRRYNQSVYGRTLENLTNKQLCNILIRCGKCQKPLCPLEKQRHVDENKRFHQIADQWTGRCTQCWRPSATVV.

2 zinc fingers span residues 31-67 (CVYC…CQPC) and 104-140 (CGKC…CTQC). The PDZ-binding domain signature appears at 146–148 (TVV).

Belongs to the papillomaviridae E6 protein family. Forms homodimers. Interacts with ubiquitin-protein ligase UBE3A/E6-AP and thus forms a complex with human TP53. Interacts with human NFX1 and MAGI3. Interacts with human IRF3; this interaction inhibits the establishment of antiviral state. Interacts with human TYK2; this interaction inhibits JAK-STAT activation by interferon alpha. Interacts with host DLG1; this interaction leads to the proteasomal degradation of DLG1.

It is found in the host cytoplasm. It localises to the host nucleus. In terms of biological role, plays a major role in the induction and maintenance of cellular transformation. Acts mainly as an oncoprotein by stimulating the destruction of many host cell key regulatory proteins. E6 associates with host UBE3A/E6-AP ubiquitin-protein ligase, and inactivates tumor suppressors TP53 and TP73 by targeting them to the 26S proteasome for degradation. In turn, DNA damage and chromosomal instabilities increase and lead to cell proliferation and cancer development. The complex E6/E6AP targets several other substrates to degradation via the proteasome including host DLG1 or NFX1, a repressor of human telomerase reverse transcriptase (hTERT). The resulting increased expression of hTERT prevents the shortening of telomere length leading to cell immortalization. Other cellular targets including BAK1, Fas-associated death domain-containing protein (FADD) and procaspase 8, are degraded by E6/E6AP causing inhibition of apoptosis. E6 also inhibits immune response by interacting with host IRF3 and TYK2. These interactions prevent IRF3 transcriptional activities and inhibit TYK2-mediated JAK-STAT activation by interferon alpha resulting in inhibition of the interferon signaling pathway. The protein is Protein E6 of Homo sapiens (Human).